Reading from the N-terminus, the 178-residue chain is Endoribonuclease YbeY (178 aa).

The Zn(2+) site is built by His118, His122, and His128. The segment at Ala158–Pro178 is disordered.

The protein belongs to the endoribonuclease YbeY family. Zn(2+) is required as a cofactor.

The protein localises to the cytoplasm. Its function is as follows. Single strand-specific metallo-endoribonuclease involved in late-stage 70S ribosome quality control and in maturation of the 3' terminus of the 16S rRNA. The polypeptide is Endoribonuclease YbeY (Mycolicibacterium smegmatis (strain ATCC 700084 / mc(2)155) (Mycobacterium smegmatis)).